The sequence spans 105 residues: U7-hexatoxin-Hi1a (105 aa).

Positions 1–23 (MKTILLFLGVCAVGASMMTGGWT) are cleaved as a signal peptide.

The protein belongs to the cystatin family. In terms of processing, contains 2 disulfide bonds. In terms of tissue distribution, expressed by the venom gland.

It is found in the secreted. Its function is as follows. Inhibits various C1 cysteine proteases. This protein has no toxic activity and its function in the venom is unknown. It may play a role as a housekeeping or regulatory protein. The polypeptide is U7-hexatoxin-Hi1a (Hadronyche infensa (Fraser island funnel-web spider)).